We begin with the raw amino-acid sequence, 768 residues long: Protein ITPRID2 (768 aa).

Disordered regions lie at residues 1–24 (MTTE…AEDS), 39–78 (LQAM…ESEE), and 98–124 (RKSG…CSPG). Composition is skewed to polar residues over residues 39 to 57 (LQAM…TVTS) and 102 to 122 (SQDF…STCS). 8 positions are modified to phosphoserine: S153, S177, S246, S248, S255, S268, S276, and S312. A disordered region spans residues 315-338 (SVKKEEAPQSEAPRVEECHHGRTP). Residues 316-334 (VKKEEAPQSEAPRVEECHH) are compositionally biased toward basic and acidic residues. A Glycyl lysine isopeptide (Lys-Gly) (interchain with G-Cter in SUMO2) cross-link involves residue K317. S378 and S411 each carry phosphoserine. A coiled-coil region spans residues 468-546 (QELQVMRRSL…GLEEQLRAVR (79 aa)). Residues S549, S564, S569, S572, S627, and S643 each carry the phosphoserine modification. Disordered stretches follow at residues 605-647 (IPPG…VGKP) and 663-718 (ALTP…AAEE). A compositionally biased stretch (polar residues) spans 610-627 (SSESVFSQATSESSSVCS). Residue T665 is modified to Phosphothreonine. Polar residues predominate over residues 667–677 (TAPSRTGSVQT). Position 670 is a phosphoserine (S670). T677 carries the post-translational modification Phosphothreonine. Residues 682–694 (ESSEEVDAAEEAP) show a composition bias toward acidic residues.

It localises to the cytoplasm. This chain is Protein ITPRID2, found in Pongo abelii (Sumatran orangutan).